The primary structure comprises 395 residues: Zinc finger protein 200 (395 aa).

The segment at 157–208 is disordered; sequence VNGSNPEGEDPEREPVENEDYREKSSDDDEMDSSLVSQQPPDNQEKERLNTS. Over residues 169-181 the composition is skewed to basic and acidic residues; the sequence is REPVENEDYREKS. Residues 246-395 form an interaction with PRMT3 region; the sequence is RRTRRWYTCP…HSACKTRKQK (150 aa). 5 C2H2-type zinc fingers span residues 252–274, 280–302, 308–330, 336–358, and 364–386; these read YTCPLCGKQFNESSYLISHQRTH, YDCNHCGKSFNHKTNLNKHERIH, YSCSQCGKNFRQNSHRSRHEGIH, FKCPECGKTFPKNEEFVLHLQSH, and YGCKKCGRRFGRLSNCTRHEKTH.

As to quaternary structure, interacts (via C-terminus) with PRMT3 (via zinc-finger); the interaction is direct and required to localize protein arginine N-methyltransferase PRMT3 to the nucleus and inhibit its proteasomal degradation. In terms of tissue distribution, highly expressed in testis, weakly expressed in spleen, thymus, prostate, ovary, small intestine colon and peripheral blood leukocytes.

It is found in the nucleus. In terms of biological role, localizes protein arginine N-methyltransferase PRMT3 to the nucleus. The protein is Zinc finger protein 200 (ZNF200) of Homo sapiens (Human).